Here is a 153-residue protein sequence, read N- to C-terminus: Ubiquitin-conjugating enzyme E2 36 (153 aa).

Residues Asn5–Ser151 enclose the UBC core domain. Cys89 serves as the catalytic Glycyl thioester intermediate.

This sequence belongs to the ubiquitin-conjugating enzyme family. Interacts with yeast and human Mms2, with the RING domain of RGLG2 and with UEV1A, UEV1B, UEV1C and UEV1D. Ubiquitously expressed at low level.

The enzyme catalyses S-ubiquitinyl-[E1 ubiquitin-activating enzyme]-L-cysteine + [E2 ubiquitin-conjugating enzyme]-L-cysteine = [E1 ubiquitin-activating enzyme]-L-cysteine + S-ubiquitinyl-[E2 ubiquitin-conjugating enzyme]-L-cysteine.. It participates in protein modification; protein ubiquitination. Functionally, catalyzes the synthesis of non-canonical poly-ubiquitin chains that are linked through 'Lys-63'. This type of poly-ubiquitination does not lead to protein degradation by the proteasome. Mediates transcriptional activation of target genes. Required for postreplication repair of UV-damaged DNA and for adapting root developmental programs to suboptimal availability of iron. The polypeptide is Ubiquitin-conjugating enzyme E2 36 (UBC36) (Arabidopsis thaliana (Mouse-ear cress)).